Here is a 154-residue protein sequence, read N- to C-terminus: Glycosylation-dependent cell adhesion molecule 1 (154 aa).

The N-terminal stretch at 1–18 (MKFLCILLLASLAATSLA) is a signal peptide. O-linked (GalNAc...) threonine; partial glycosylation is present at Thr34. Ser48, Ser53, Ser57, Ser59, and Ser65 each carry phosphoserine. A compositionally biased stretch (basic and acidic residues) spans 51–65 (DLSKEPSISREDLIS). The segment at 51–115 (DLSKEPSISR…EHAPSDASTT (65 aa)) is disordered. An N-linked (GlcNAc...) asparagine glycan is attached at Asn96.

This sequence belongs to the PP3/GlyCAM-1 family. In terms of tissue distribution, highly and specifically expressed in the lactating mammary gland.

The protein localises to the membrane. The protein is Glycosylation-dependent cell adhesion molecule 1 (GLYCAM1) of Capra hircus (Goat).